Reading from the N-terminus, the 293-residue chain is D-psicose 3-epimerase (293 aa).

Substrate-binding residues include tyrosine 6 and alanine 107. Catalysis depends on glutamate 150, which acts as the Proton donor/acceptor. Glutamate 150 contributes to the Mn(2+) binding site. Residues glutamate 156 and 183–186 (DTFH) contribute to the substrate site. Mn(2+) contacts are provided by aspartate 183 and histidine 209. Arginine 215 contacts substrate. Glutamate 244 acts as the Proton donor/acceptor in catalysis. Residue glutamate 244 participates in Mn(2+) binding.

This sequence belongs to the hyi family. In terms of assembly, homotetramer. Mn(2+) is required as a cofactor. The cofactor is Co(2+).

The enzyme catalyses D-allulose = keto-D-fructose. Its function is as follows. Involved in the biosynthesis of D-psicose. Catalyzes the reversible epimerization of D-fructose at the C3 position to yield D-psicose. The enzyme is highly specific for D-psicose and shows very low activity with D-tagatose. In Ruminiclostridium cellulolyticum (strain ATCC 35319 / DSM 5812 / JCM 6584 / H10) (Clostridium cellulolyticum), this protein is D-psicose 3-epimerase.